Reading from the N-terminus, the 415-residue chain is MSLITDISRQAAKAAHQLALLDTETKNKVLLDMAAALRAEKAFIIKENESDLAAARDNNLAAAMVDRLTLNDERVEAMAEGIEVIVSLDDPVGQLRDITERPNGIKIRKMRVPLGVVCMIYEARPNVTADAGALCFKSGNSVILRGGKEALKSSQAIASVMHSVLAKHNLPEALISVIPDPDRGLLMELMQQRDSIDLIIPRGGEGLINFVTENSTIPVIQHFKGVCHLYVDKDADLEVAINLLLNGKTQRTGVCNALEGLVVHQDIANEFLNLCAVVLRQEGVKINADSQAATYFDNATVLGDDEFGEEYLDLEIAIRVVPSFAAAVEHIAQFGSHHTEVICTKNAATAELFQRSVDASVVTVNASSRFSDGSQLGLGAEIGIATSKLHAYGPMGLESLTTEKYLVNGDGQIRE.

This sequence belongs to the gamma-glutamyl phosphate reductase family.

Its subcellular location is the cytoplasm. It catalyses the reaction L-glutamate 5-semialdehyde + phosphate + NADP(+) = L-glutamyl 5-phosphate + NADPH + H(+). The protein operates within amino-acid biosynthesis; L-proline biosynthesis; L-glutamate 5-semialdehyde from L-glutamate: step 2/2. Functionally, catalyzes the NADPH-dependent reduction of L-glutamate 5-phosphate into L-glutamate 5-semialdehyde and phosphate. The product spontaneously undergoes cyclization to form 1-pyrroline-5-carboxylate. The polypeptide is Gamma-glutamyl phosphate reductase (Pseudoalteromonas translucida (strain TAC 125)).